The sequence spans 393 residues: MNMSAWALPEYIEDILPAEALKIEMMRRRVLDWLFVNGYELVGPPLLEYVESLLTGSGGQMNLRVLKVVDQLSGRMMGLRADMTPQVARIDAHLLNRKGITRLCYAGSVLHARPSGLTRTREPLQIGAELYGHQGLESDLEIQRLMLQSLAIAGVGNIHLDLGHVAVFRGLIRSTGISPDLEMELSGALQGKDKAALKELCAGLKKQVDASVREALQLLPELYGDENVLTLARSALPSYPGIMKALDELEMVASELSPLVDTLAFDLADLRGYHYHSGMVFAAYTDNCPNAIAVGGRYDEVGKAFGRARPATGFSMDLRELSGLMSSDSHPRGILAPFIKEDKALEKKIEQLRNEGQIVIVALPGHENDAGSFNCDKKLVSENGVWSIADALI.

The protein belongs to the class-II aminoacyl-tRNA synthetase family. HisZ subfamily. In terms of assembly, heteromultimer composed of HisG and HisZ subunits.

The protein resides in the cytoplasm. It functions in the pathway amino-acid biosynthesis; L-histidine biosynthesis; L-histidine from 5-phospho-alpha-D-ribose 1-diphosphate: step 1/9. Required for the first step of histidine biosynthesis. May allow the feedback regulation of ATP phosphoribosyltransferase activity by histidine. The sequence is that of ATP phosphoribosyltransferase regulatory subunit from Nitrosospira multiformis (strain ATCC 25196 / NCIMB 11849 / C 71).